The sequence spans 391 residues: UPF0229 protein CA_C0580 (391 aa).

2 disordered regions span residues 1 to 20 and 75 to 109; these read MAIF…TIGD and VGSG…NSEG. Gly residues predominate over residues 96 to 106; that stretch reads GSKGKGKGAGN.

Belongs to the UPF0229 family.

In Clostridium acetobutylicum (strain ATCC 824 / DSM 792 / JCM 1419 / IAM 19013 / LMG 5710 / NBRC 13948 / NRRL B-527 / VKM B-1787 / 2291 / W), this protein is UPF0229 protein CA_C0580.